A 482-amino-acid polypeptide reads, in one-letter code: Vanillin dehydrogenase (482 aa).

228–233 (GSTHVG) provides a ligand contact to NAD(+). Catalysis depends on residues glutamate 250 and cysteine 284.

Belongs to the aldehyde dehydrogenase family.

It carries out the reaction vanillin + NAD(+) + H2O = vanillate + NADH + 2 H(+). In terms of biological role, catalyzes the NAD-dependent oxidation of vanillin to vanillic acid. This is Vanillin dehydrogenase (vdh) from Pseudomonas fluorescens.